The sequence spans 169 residues: NADH-quinone oxidoreductase subunit B (169 aa).

[4Fe-4S] cluster-binding residues include C42, C43, C107, and C136.

This sequence belongs to the complex I 20 kDa subunit family. NDH-1 is composed of 14 different subunits. Subunits NuoB, C, D, E, F, and G constitute the peripheral sector of the complex. [4Fe-4S] cluster serves as cofactor.

It localises to the cell inner membrane. The catalysed reaction is a quinone + NADH + 5 H(+)(in) = a quinol + NAD(+) + 4 H(+)(out). Its function is as follows. NDH-1 shuttles electrons from NADH, via FMN and iron-sulfur (Fe-S) centers, to quinones in the respiratory chain. The immediate electron acceptor for the enzyme in this species is believed to be ubiquinone. Couples the redox reaction to proton translocation (for every two electrons transferred, four hydrogen ions are translocated across the cytoplasmic membrane), and thus conserves the redox energy in a proton gradient. The protein is NADH-quinone oxidoreductase subunit B of Wolinella succinogenes (strain ATCC 29543 / DSM 1740 / CCUG 13145 / JCM 31913 / LMG 7466 / NCTC 11488 / FDC 602W) (Vibrio succinogenes).